We begin with the raw amino-acid sequence, 217 residues long: MNQSLLAPFGTAIERVEAGLNALRQGQGVLVVDDEDRENEGDLIFAAQTLTNTQMAMLIRECSGIVCLCLPDEKVKALELPPMVENNSSQYGTAFTVSIEAKVGVTTGVSAADRVTTIKAAIADGAKPSDLARPGHVYPLRAQPGGVLTRRGHTEGTIDLMQLAGLKPAGVLCEVTNPDGTMARLPEIIAFGAQHNIPVLTIEDIVLYRKSLLANVG.

Residues arginine 37 to glutamate 38, aspartate 42, arginine 150 to threonine 154, and glutamate 174 each bind D-ribulose 5-phosphate. Position 38 (glutamate 38) interacts with Mg(2+). Histidine 153 serves as a coordination point for Mg(2+).

Belongs to the DHBP synthase family. As to quaternary structure, homodimer. Requires Mg(2+) as cofactor. The cofactor is Mn(2+).

The enzyme catalyses D-ribulose 5-phosphate = (2S)-2-hydroxy-3-oxobutyl phosphate + formate + H(+). It functions in the pathway cofactor biosynthesis; riboflavin biosynthesis; 2-hydroxy-3-oxobutyl phosphate from D-ribulose 5-phosphate: step 1/1. Catalyzes the conversion of D-ribulose 5-phosphate to formate and 3,4-dihydroxy-2-butanone 4-phosphate. The sequence is that of 3,4-dihydroxy-2-butanone 4-phosphate synthase from Shewanella putrefaciens (strain CN-32 / ATCC BAA-453).